Reading from the N-terminus, the 1129-residue chain is MQKMQCHLRRPLHSSSSFSSQAVMMTKPMQEHKKEYTAQQALFRPSGIVTSIPVPLAGSALLPYHVSSTLYQSKSLSSSEHNKANGGSPQEHIAMESSAEEVDCFKNTCLPSELSPCSQNDFKPTNGDIDMQSPSKLMSGSMIISNFSTAMVHTIVNETLESMTSFKATKPVDTNADYLTKTIKGKPVLSLCDQAAPQQNKASSKDMFAEHLSKSIIKHSLDKSKSVLPNIDKKPVSKEHMLVLGEESQLTLGETPKFLDFSDNSPQYCVPECKDSVGFGFSLEALPPCSMMTSQKSDLKGVMKDKVVTRHNLTNTAFEPLSFGQESSFRPSQTLSSAVLTCVDSLHVEDKQKIRDRNVIPDTPPSTPLVPSQTSSEWDIKKLTKQLKGELAKEFAPATPPSTPHNSSVGSLSENEQTTIEKEEFMLKLMRSLSEEVESSEGEEHPEMDVKSEHSGKKGQFADALATHIISLATEVAASHLDHEITQEFKVQNSHLTVPSQRSMLPALSHSDESIQTCSFASDMAAGVIAEAEKVANTRSCMLFGHERTICHVEGDRGKAEEKLDVEDIAHPREVETCVLSLPSCMPGLTYKYPSCESVTDEYAGHIIQVLKQEGGNSELIMDQYASRLAYRSVKSGVREAAKTVKVKCSLKLFPMHTSHVKTNKELLFSSKEHHQEVDKKRQRKKYGSHPCKYQTCDRTQDPCRNELSELYRFSASLASSITRDVKKQLTAPKVDLPKSSTDCCLFEKSECVDNRENVTGPEFSKSCQPLQNHGLCQNTSSLSGYSCGESAHTVEQYARKVVGDTLELSLGPAVFLNSETTTSPDRITYAEKLSPLINEACRYCDLKESHGCIRNSAQLFSKQGPCASAKPSSHSKLSSIRQKSRIFHLDVPQIHLNLDKRAVLAEKIVAEAIEKAERELSNTSLAADSGIGQDGISFAESLTTEIMTTAMTNAGHAVSSSKEVEDFQSTESLGSQQMNLSVGEDSTGSWSNLSFEDDHQDESSSFHHLSESSNGNSSSWSSLGLEGDLYENNLSFPTSDSDGPDDRESEQEDGAEGLQPSGKTLLIVNIDVEPGAVDPQLRVILQWLIPRRRKLENFIFSTLQRRSLSYFQSSYRREDGKWAMSCRL.

Residues 1–12 (MQKMQCHLRRPL) show a composition bias toward basic residues. Residues 1–21 (MQKMQCHLRRPLHSSSSFSSQ) are disordered. Thr-251 and Thr-363 each carry phosphothreonine. Disordered regions lie at residues 354–376 (IRDR…QTSS), 394–416 (EFAP…SENE), and 434–455 (SEEV…SEHS). Residues 404–416 (PHNSSVGSLSENE) show a composition bias toward polar residues. Residues Ser-434, Ser-439, and Ser-440 each carry the phosphoserine modification. A compositionally biased stretch (basic and acidic residues) spans 442–455 (GEEHPEMDVKSEHS). Residue Ser-595 is modified to Phosphoserine. Position 742 is a phosphothreonine (Thr-742). Ser-835 bears the Phosphoserine mark. The PKA-RII binding region stretch occupies residues 905-918 (LAEKIVAEAIEKAE). Positions 962-1061 (SKEVEDFQST…QEDGAEGLQP (100 aa)) are disordered. Residues 968–995 (FQSTESLGSQQMNLSVGEDSTGSWSNLS) show a composition bias toward polar residues. Over residues 1002–1011 (DESSSFHHLS) the composition is skewed to basic and acidic residues. Positions 1012-1028 (ESSNGNSSSWSSLGLEG) are enriched in low complexity. A compositionally biased stretch (polar residues) spans 1033 to 1042 (NNLSFPTSDS). Residues 1043–1056 (DGPDDRESEQEDGA) are compositionally biased toward acidic residues.

As to expression, expressed in brain and testis.

The protein resides in the peroxisome. In terms of biological role, binds to type II regulatory subunits of protein kinase A and anchors/targets them. The protein is A-kinase anchor protein 11 (Akap11) of Rattus norvegicus (Rat).